The primary structure comprises 177 residues: Transcriptional repressor NrdR (177 aa).

A zinc finger lies at 3–34 (CLFCQHTDTRVIDSRVSEDGATIRRRRECEAC). One can recognise an ATP-cone domain in the interval 49–139 (PVIIKKDGGR…VYRSFQDVAD (91 aa)).

The protein belongs to the NrdR family. Requires Zn(2+) as cofactor.

In terms of biological role, negatively regulates transcription of bacterial ribonucleotide reductase nrd genes and operons by binding to NrdR-boxes. In Xylella fastidiosa (strain M23), this protein is Transcriptional repressor NrdR.